Here is a 359-residue protein sequence, read N- to C-terminus: Peptide methionine sulfoxide reductase MsrA/MsrB (359 aa).

Residues 36 to 189 form a peptide methionine sulfoxide reductase A region; it reads RVIYLAGGCF…PSGYCHIDLK (154 aa). Cys44 is an active-site residue. Residues 206 to 329 form the MsrB domain; sequence DEVLKKKLTK…NSAALRFIPL (124 aa). The active-site Nucleophile is Cys318.

This sequence in the N-terminal section; belongs to the MsrA Met sulfoxide reductase family. The protein in the C-terminal section; belongs to the MsrB Met sulfoxide reductase family.

It catalyses the reaction L-methionyl-[protein] + [thioredoxin]-disulfide + H2O = L-methionyl-(S)-S-oxide-[protein] + [thioredoxin]-dithiol. It carries out the reaction [thioredoxin]-disulfide + L-methionine + H2O = L-methionine (S)-S-oxide + [thioredoxin]-dithiol. The catalysed reaction is L-methionyl-[protein] + [thioredoxin]-disulfide + H2O = L-methionyl-(R)-S-oxide-[protein] + [thioredoxin]-dithiol. Functionally, has an important function as a repair enzyme for proteins that have been inactivated by oxidation. Catalyzes the reversible oxidation-reduction of methionine sulfoxide in proteins to methionine. This is Peptide methionine sulfoxide reductase MsrA/MsrB (msrAB) from Helicobacter pylori (strain ATCC 700392 / 26695) (Campylobacter pylori).